A 311-amino-acid polypeptide reads, in one-letter code: Aspartate carbamoyltransferase catalytic subunit (311 aa).

Carbamoyl phosphate contacts are provided by Arg-59 and Thr-60. Lys-87 is a binding site for L-aspartate. Carbamoyl phosphate contacts are provided by Arg-109, His-139, and Gln-142. Arg-172 and Arg-224 together coordinate L-aspartate. Carbamoyl phosphate contacts are provided by Ala-265 and Pro-266.

This sequence belongs to the aspartate/ornithine carbamoyltransferase superfamily. ATCase family. Heterododecamer (2C3:3R2) of six catalytic PyrB chains organized as two trimers (C3), and six regulatory PyrI chains organized as three dimers (R2).

It carries out the reaction carbamoyl phosphate + L-aspartate = N-carbamoyl-L-aspartate + phosphate + H(+). Its pathway is pyrimidine metabolism; UMP biosynthesis via de novo pathway; (S)-dihydroorotate from bicarbonate: step 2/3. In terms of biological role, catalyzes the condensation of carbamoyl phosphate and aspartate to form carbamoyl aspartate and inorganic phosphate, the committed step in the de novo pyrimidine nucleotide biosynthesis pathway. The protein is Aspartate carbamoyltransferase catalytic subunit of Streptococcus pyogenes serotype M1.